Here is a 295-residue protein sequence, read N- to C-terminus: Protease HtpX (295 aa).

2 helical membrane-spanning segments follow: residues 4–24 and 42–62; these read ILLF…TLSL and QLLV…LFIS. His147 is a binding site for Zn(2+). Glu148 is a catalytic residue. His151 is a Zn(2+) binding site. Helical transmembrane passes span 158 to 178 and 195 to 215; these read VTLA…ARII and IAYF…ASAI. Glu224 serves as a coordination point for Zn(2+).

Belongs to the peptidase M48B family. The cofactor is Zn(2+).

The protein resides in the cell inner membrane. The protein is Protease HtpX of Pseudomonas fluorescens (strain SBW25).